The primary structure comprises 530 residues: Neutral amino acid transporter A (530 aa).

At Met-1 the chain carries N-acetylmethionine. Positions 1–10 (MEKSSETNGY) are enriched in polar residues. The segment at 1-28 (MEKSSETNGYLDSAQEGPAAGPGEPGTT) is disordered. Residues 1–41 (MEKSSETNGYLDSAQEGPAAGPGEPGTTARRAGRCAGFLRR) lie on the Cytoplasmic side of the membrane. Over residues 16 to 28 (EGPAAGPGEPGTT) the composition is skewed to low complexity. The next 3 helical transmembrane spans lie at 42-62 (HGLV…GAAL), 88-108 (MIIL…LDAS), and 119-139 (AYFG…AFII). Residues 140–216 (KPGSGSQTLQ…VTIEKIPIGT (77 aa)) lie on the Extracellular side of the membrane. A glycan (N-linked (GlcNAc...) asparagine) is linked at Asn-201. 6 helical membrane-spanning segments follow: residues 217-237 (EIEG…GVAL), 257-277 (ATMV…MFLV), 298-318 (IFTS…LIYF), 328-348 (FLLG…SSAT), 373-393 (IGAT…AVFI), and 418-438 (VGAA…LEAI). A disordered region spans residues 488–530 (ELSEVKVEAIPNSKSEEETSPLVTHPNPTGPAASTPESKESVL). Ser-507, Ser-525, and Ser-528 each carry phosphoserine.

It belongs to the dicarboxylate/amino acid:cation symporter (DAACS) (TC 2.A.23) family. SLC1A4 subfamily.

The protein resides in the membrane. Its subcellular location is the melanosome. It carries out the reaction L-threonine(in) + Na(+)(in) = L-threonine(out) + Na(+)(out). The catalysed reaction is L-serine(in) + Na(+)(in) = L-serine(out) + Na(+)(out). It catalyses the reaction L-cysteine(in) + Na(+)(in) = L-cysteine(out) + Na(+)(out). The enzyme catalyses L-alanine(in) + Na(+)(in) = L-alanine(out) + Na(+)(out). It carries out the reaction L-proline(in) + Na(+)(in) = L-proline(out) + Na(+)(out). The catalysed reaction is 4-hydroxy-L-proline(in) + Na(+)(in) = 4-hydroxy-L-proline(out) + Na(+)(out). Sodium-dependent neutral amino-acid transporter that mediates transport of alanine, serine, cysteine, proline, hydroxyproline and threonine. This Bos taurus (Bovine) protein is Neutral amino acid transporter A (SLC1A4).